The chain runs to 124 residues: Protein CYSTEINE-RICH TRANSMEMBRANE MODULE 10 (124 aa).

The disordered stretch occupies residues 1–103 (MSYQDPQHPV…PKNKKDKKDS (103 aa)). 2 stretches are compositionally biased toward pro residues: residues 27-40 (AGYPPPAGYPPPQY) and 65-88 (GYPPPQYPQGHPPQYPYQGPPPPH). The chain crosses the membrane as a helical span at residues 101-118 (KDSGGFMEGCLAMLCCCV).

It belongs to the CYSTM1 family. In terms of assembly, heterodimers. Interacts with CYSTM7 and WIH1/CYSTM13. As to expression, mostly expressed in stems and,at low levels, in stems, roots, flowers, siliques and leaves.

It localises to the cell membrane. Its subcellular location is the cytoplasm. In terms of biological role, involved in resistance to abiotic stress. The polypeptide is Protein CYSTEINE-RICH TRANSMEMBRANE MODULE 10 (Arabidopsis thaliana (Mouse-ear cress)).